A 762-amino-acid chain; its full sequence is 1-phosphatidylinositol 4,5-bisphosphate phosphodiesterase delta-4 (762 aa).

The PH domain occupies 16-124; the sequence is LLMQEGMPMR…WMRGLQLLVD (109 aa). The tract at residues 26–53 is substrate binding; it reads KVRSKSWKKLRYFRLQNDGMTVWHARQA. 3 EF-hand domains span residues 134 to 169, 170 to 205, and 206 to 237; these read RLDQWLSDWFQRGDKNQDGKMSFQEVQRLLHLMNVE, MDQEYAFSLFQAADTSQSGTLEGEEFVQFYKALTKR, and AEVQELFESFSADGQKLTLLEFLDFLQEEQKE. Residues Asp147, Asn149, Asp151, Lys153, Glu158, Asp183, Ser185, Ser187, Thr189, and Glu194 each contribute to the Ca(2+) site. Positions 213 to 243 match the GBA motif; sequence ESFSADGQKLTLLEFLDFLQEEQKERDCTSE. In terms of domain architecture, PI-PLC X-box spans 290-435; sequence QDMTQPLNHY…LRRKILVKGK (146 aa). Residue His305 is part of the active site. Ca(2+) contacts are provided by Asn306, Glu335, and Asp337. His350 is a catalytic residue. Glu384 provides a ligand contact to Ca(2+). Residues Lys433 and Lys435 each contribute to the substrate site. Over residues 443–471 the composition is skewed to acidic residues; it reads LEYEEEEAEPELEESELALESQFETEPEP. A disordered region spans residues 443-483; it reads LEYEEEEAEPELEESELALESQFETEPEPQEQNLQNKDKKK. The residue at position 457 (Ser457) is a Phosphoserine. The 117-residue stretch at 493–609 folds into the PI-PLC Y-box domain; that stretch reads LSSLVIYLKS…GYVLKPDFLR (117 aa). Substrate-binding residues include Ser522 and Arg549. Residues 609–736 enclose the C2 domain; the sequence is RDIQSSFHPE…QGYRHIHLLS (128 aa). Ca(2+)-binding residues include Ile650, Asp652, Asn676, Asp705, Tyr706, and Asp707. The short motif at 731-734 is the PDZ-binding element; sequence HIHL.

Interacts with GRIP1. In terms of assembly, interacts (via GBA motif) with guanine nucleotide-binding protein G(i) alpha subunit GNAI3 (inactive GDP-bound form); high-affinity interaction. As to quaternary structure, interacts (via GBA motif) with guanine nucleotide-binding protein G(i) alpha subunit GNAI3 (inactive GDP-bound form); low-affinity interaction. Ca(2+) serves as cofactor. In terms of tissue distribution, highly expressed in skeletal muscle and kidney tissues, and at moderate level in intestinal tissue. Expressed in corneal epithelial cells.

It is found in the membrane. It localises to the nucleus. The protein resides in the cytoplasm. The protein localises to the endoplasmic reticulum. The catalysed reaction is a 1,2-diacyl-sn-glycero-3-phospho-(1D-myo-inositol-4,5-bisphosphate) + H2O = 1D-myo-inositol 1,4,5-trisphosphate + a 1,2-diacyl-sn-glycerol + H(+). It carries out the reaction a 1,2-diacyl-sn-glycero-3-phospho-(1D-myo-inositol) + H2O = 1D-myo-inositol 1-phosphate + a 1,2-diacyl-sn-glycerol + H(+). Hydrolyzes the phosphatidylinositol 4,5-bisphosphate (PIP2) to generate 2 second messenger molecules diacylglycerol (DAG) and inositol 1,4,5-trisphosphate (IP3). DAG mediates the activation of protein kinase C (PKC), while IP3 releases Ca(2+) from intracellular stores. Required for acrosome reaction in sperm during fertilization, probably by acting as an important enzyme for intracellular Ca(2+) mobilization in the zona pellucida-induced acrosome reaction. May play a role in cell growth. Modulates the liver regeneration in cooperation with nuclear PKC. Overexpression up-regulates the Erk signaling pathway and proliferation. In terms of biological role, acts as a non-receptor guanine nucleotide exchange factor which binds to and activates guanine nucleotide-binding protein (G-protein) alpha subunit GNAI3. This chain is 1-phosphatidylinositol 4,5-bisphosphate phosphodiesterase delta-4, found in Homo sapiens (Human).